A 364-amino-acid polypeptide reads, in one-letter code: Endopolygalacturonase B (364 aa).

An N-terminal signal peptide occupies residues 1-20; sequence MHFLQNSLIAAAMGAALVAA. The propeptide occupies 21–29; sequence APAADLDAR. Cysteine 32 and cysteine 47 are oxidised to a cystine. A glycan (N-linked (GlcNAc...) asparagine) is linked at asparagine 138. PbH1 repeat units lie at residues 159–188, 189–210, 211–231, 240–261, 269–291, and 303–348; these read SDHL…DIGS, STYI…AINS, GEHI…SIGS, VKSV…RIKT, VTDV…IVEQ, and TNGV…DITG. Residue aspartate 203 is the Proton donor of the active site. Cysteine 205 and cysteine 221 are disulfide-bonded. Histidine 225 is an active-site residue. 2 disulfides stabilise this stretch: cysteine 331–cysteine 336 and cysteine 355–cysteine 364.

Belongs to the glycosyl hydrolase 28 family.

The protein resides in the secreted. The enzyme catalyses (1,4-alpha-D-galacturonosyl)n+m + H2O = (1,4-alpha-D-galacturonosyl)n + (1,4-alpha-D-galacturonosyl)m.. In terms of biological role, involved in maceration and soft-rotting of plant tissue. Hydrolyzes the 1,4-alpha glycosidic bonds of de-esterified pectate in the smooth region of the plant cell wall. The polypeptide is Endopolygalacturonase B (pgaB) (Emericella nidulans (strain FGSC A4 / ATCC 38163 / CBS 112.46 / NRRL 194 / M139) (Aspergillus nidulans)).